A 232-amino-acid chain; its full sequence is PsbP domain-containing protein 2, chloroplastic (232 aa).

The transit peptide at 1 to 34 (MWSQSFLGSAPKLCLFSSSLPPFSHHKIHKFFCF) directs the protein to the chloroplast. A thylakoid-targeting transit peptide spans 35-71 (AQNPSSTVSINLSKRHLNLSILTLFFNGFLLDNKAKS).

Belongs to the PsbP family.

It is found in the plastid. The protein localises to the chloroplast thylakoid lumen. The sequence is that of PsbP domain-containing protein 2, chloroplastic (PPD2) from Arabidopsis thaliana (Mouse-ear cress).